The primary structure comprises 278 residues: Cytidine kinase (278 aa).

203–208 is an ATP binding site; sequence TRGEKG. The Proton acceptor role is filled by Asp-237.

This sequence belongs to the carbohydrate kinase PfkB family. Requires Mg(2+) as cofactor.

It catalyses the reaction cytidine + ATP = CMP + ADP + H(+). Its function is as follows. Involved in nucleoside degradation. Phosphorylates cytidine to CMP. Can also act on deoxycytidine and uridine, but is most active with cytidine. ATP is the most preferred phosphate donor, but it can also use GTP, CTP or UTP. In Thermococcus kodakarensis (strain ATCC BAA-918 / JCM 12380 / KOD1) (Pyrococcus kodakaraensis (strain KOD1)), this protein is Cytidine kinase.